The sequence spans 357 residues: Crh-like protein 1 (357 aa).

The first 17 residues, 1 to 17 (MMLPLLAVSAFASLGAA), serve as a signal peptide directing secretion. Residues 20–220 (YTSCNPTNSL…WAGGETDYDE (201 aa)) enclose the GH16 domain. Residues N52 and N92 are each glycosylated (N-linked (GlcNAc...) asparagine). The active-site Nucleophile is E109. E113 (proton donor) is an active-site residue. Position 113 (E113) interacts with chitin. A glycan (N-linked (GlcNAc...) asparagine) is linked at N131. Chitin contacts are provided by K193, W197, and T208. Residues N242 and N257 are each glycosylated (N-linked (GlcNAc...) asparagine). The GPI-anchor amidated glycine moiety is linked to residue G326. The propeptide at 327 to 357 (SASAVFTGAAVTNLPSFFFTVFFALAIALAF) is removed in mature form. Residues 337 to 357 (VTNLPSFFFTVFFALAIALAF) form a helical membrane-spanning segment.

The protein belongs to the glycosyl hydrolase 16 family. CRH1 subfamily. Post-translationally, the GPI-like anchor contains a phosphoceramide lipid group. The anchor position has not been determined.

Its subcellular location is the cell membrane. The protein resides in the secreted. The protein localises to the cell wall. It catalyses the reaction Random endo-hydrolysis of N-acetyl-beta-D-glucosaminide (1-&gt;4)-beta-linkages in chitin and chitodextrins.. Functionally, dual chitinase/transglycosylase that plays a role in cell wall architecture. Chitinase and transglycosylase activities are coupled. Required for the polysaccharide cross-linking at the septa and the cell wall. More specifically, transfers chitin to 1,6-beta-glucan in the cell wall. The sequence is that of Crh-like protein 1 from Aspergillus fumigatus (strain ATCC MYA-4609 / CBS 101355 / FGSC A1100 / Af293) (Neosartorya fumigata).